The chain runs to 287 residues: Inhibitory synaptic factor 1 (287 aa).

The interval 1 to 22 (MSQSRAPAREPSETPSQREQIR) is disordered. Residues 25-58 (MKMVIQQLEGILKELKDVAHELREVVGQIDKLTS) are a coiled coil. Disordered regions lie at residues 113 to 174 (RRSA…GTRE) and 189 to 287 (CDDD…NKDL). Positions 153-167 (EEASSSTHSQSQKTS) are enriched in low complexity. Positions 189 to 209 (CDDDEDEDEDEDGRDEEEDKL) are enriched in acidic residues. Positions 259-274 (RNSSTQTVSDKSTQTL) are enriched in polar residues.

Belongs to the INSYN1 family.

It is found in the postsynaptic density. Functionally, may be a component of the protein machinery at the inhibitory synapses, probably acting as a scaffold. The polypeptide is Inhibitory synaptic factor 1 (Danio rerio (Zebrafish)).